A 318-amino-acid polypeptide reads, in one-letter code: Ankyrin repeat domain-containing protein 1 (318 aa).

Residues 37 to 77 (ALEKQEDLKTTSKSLIELEEEKQIKEKQLKSELLKKKLEER) are a coiled coil. 6 ANK repeats span residues 118 to 147 (VDQT…DPNT), 151 to 180 (YKRT…NIEF), 184 to 213 (LEST…AINA), 217 to 246 (LLST…DLHA), 250 to 279 (EGDT…DLNI), and 283 to 314 (AGKT…KNSH).

It localises to the nucleus. May act as a nuclear transcription factor that negatively regulates the expression of cardiac genes. The chain is Ankyrin repeat domain-containing protein 1 (ankrd1) from Xenopus tropicalis (Western clawed frog).